We begin with the raw amino-acid sequence, 119 residues long: Holo-[acyl-carrier-protein] synthase (119 aa).

Positions 8 and 58 each coordinate Mg(2+).

The protein belongs to the P-Pant transferase superfamily. AcpS family. It depends on Mg(2+) as a cofactor.

Its subcellular location is the cytoplasm. The catalysed reaction is apo-[ACP] + CoA = holo-[ACP] + adenosine 3',5'-bisphosphate + H(+). In terms of biological role, transfers the 4'-phosphopantetheine moiety from coenzyme A to a Ser of acyl-carrier-protein. The protein is Holo-[acyl-carrier-protein] synthase of Bacillus cereus (strain ATCC 14579 / DSM 31 / CCUG 7414 / JCM 2152 / NBRC 15305 / NCIMB 9373 / NCTC 2599 / NRRL B-3711).